Reading from the N-terminus, the 544-residue chain is Calcium-dependent protein kinase 6 (544 aa).

The interval 1-47 (MGNSCRGSFKDKIYEGNHSRPEENSKSTTTTVSSVHSPTTDQDFSKQ) is disordered. Residue glycine 2 is the site of N-myristoyl glycine attachment. Residues 8–25 (SFKDKIYEGNHSRPEENS) show a composition bias toward basic and acidic residues. The span at 26–40 (KSTTTTVSSVHSPTT) shows a compositional bias: low complexity. The region spanning 85 to 343 (YTLSRKLGQG…AHEVLRHPWI (259 aa)) is the Protein kinase domain. ATP contacts are provided by residues 91–99 (LGQGQFGTT) and lysine 114. The active-site Proton acceptor is aspartate 209. Serine 249 is modified (phosphoserine). Residues 349–379 (APDRALDPAVLSRLKQFSAMNKLKKMALKVI) are autoinhibitory domain. EF-hand domains follow at residues 386–421 (EEIA…YGST), 422–457 (LKDT…LNKL), 458–493 (EREE…HGMT), and 497–527 (LEDI…GNAG). 19 residues coordinate Ca(2+): aspartate 399, aspartate 401, serine 403, glutamate 410, aspartate 435, aspartate 437, serine 439, threonine 441, glutamate 446, aspartate 471, aspartate 473, serine 475, tyrosine 477, glutamate 482, aspartate 505, aspartate 507, aspartate 509, arginine 511, and glutamate 516.

This sequence belongs to the protein kinase superfamily. Ser/Thr protein kinase family. CDPK subfamily. As to quaternary structure, interacts with SLAC1. Interacts with FD. As to expression, expressed in both guard cells and mesophyll cells. Expressed in the shoot apical meristem.

It localises to the cell membrane. The protein resides in the nucleus. It catalyses the reaction L-seryl-[protein] + ATP = O-phospho-L-seryl-[protein] + ADP + H(+). It carries out the reaction L-threonyl-[protein] + ATP = O-phospho-L-threonyl-[protein] + ADP + H(+). Activated by calcium. Autophosphorylation may play an important role in the regulation of the kinase activity. Its function is as follows. May play a role in signal transduction pathways that involve calcium as a second messenger. Functions in abscisic acid (ABA) regulation of guard cell S-type anion- and Ca(2+)-permeable channels and stomatal closure. Phosphorylates FD. This chain is Calcium-dependent protein kinase 6 (CPK6), found in Arabidopsis thaliana (Mouse-ear cress).